The sequence spans 507 residues: Putative thymidine phosphorylase (507 aa).

This sequence belongs to the thymidine/pyrimidine-nucleoside phosphorylase family. Type 2 subfamily.

It catalyses the reaction thymidine + phosphate = 2-deoxy-alpha-D-ribose 1-phosphate + thymine. The protein is Putative thymidine phosphorylase of Ralstonia nicotianae (strain ATCC BAA-1114 / GMI1000) (Ralstonia solanacearum).